The following is a 93-amino-acid chain: Putative septation protein SpoVG (93 aa).

This sequence belongs to the SpoVG family.

Its function is as follows. Could be involved in septation. The sequence is that of Putative septation protein SpoVG from Lachnoclostridium phytofermentans (strain ATCC 700394 / DSM 18823 / ISDg) (Clostridium phytofermentans).